We begin with the raw amino-acid sequence, 426 residues long: Phosphomethylpyrimidine synthase (426 aa).

Substrate is bound by residues asparagine 65, methionine 94, tyrosine 123, histidine 162, 184-186 (SRG), 225-228 (DGMR), and glutamate 264. Histidine 268 lines the Zn(2+) pocket. Tyrosine 291 lines the substrate pocket. Position 332 (histidine 332) interacts with Zn(2+). [4Fe-4S] cluster is bound by residues cysteine 408, cysteine 411, and cysteine 415.

It belongs to the ThiC family. [4Fe-4S] cluster serves as cofactor.

It catalyses the reaction 5-amino-1-(5-phospho-beta-D-ribosyl)imidazole + S-adenosyl-L-methionine = 4-amino-2-methyl-5-(phosphooxymethyl)pyrimidine + CO + 5'-deoxyadenosine + formate + L-methionine + 3 H(+). It participates in cofactor biosynthesis; thiamine diphosphate biosynthesis. Its function is as follows. Catalyzes the synthesis of the hydroxymethylpyrimidine phosphate (HMP-P) moiety of thiamine from aminoimidazole ribotide (AIR) in a radical S-adenosyl-L-methionine (SAM)-dependent reaction. This is Phosphomethylpyrimidine synthase from Methanococcus maripaludis (strain C7 / ATCC BAA-1331).